The primary structure comprises 424 residues: MAKYLINARVEVDGVVEKHDIIGAIFGQTEGLFGEQFDLRTLQDKNRIGRIQVMTKIHNGKTIGELIIPSNLDRLETALVAAMIESVDRVGPYSARIEVVDIIDVRLEKIKKIIDRAIEILHEWSKEKAPDIKEILKEMQEALKVPEPQKYGPEQLPAGPGVDESDTIIIVEGRADVINLLRYGFTNVIALGGARKVPNTIKNLAKKKKVIVFLDGDHGGDLILKELLRTIKVDFIARAPEGREVEELTGKEIREALSKAVPTREYLEKLAKQGNKEAQYLLQVQERLAREVAEQIKPQVKVEEKKPVEKPVPKPPKTVEEVVEAVSIPLRIREDIKSLYGTLEAILYDNEWNSVKRLPVRDLVNTLDELDENNVQAIVMDGIITQRLIDKASEKKVKMIIAAKIGRINYKPPEILILTFNDIM.

Residues 166–241 (DTIIIVEGRA…KVDFIARAPE (76 aa)) form the Toprim domain. Residues Glu172, Asp215, and Asp217 each coordinate Mg(2+).

This sequence belongs to the archaeal DnaG primase family. As to quaternary structure, forms a ternary complex with MCM helicase and DNA. Component of the archaeal exosome complex. It depends on Mg(2+) as a cofactor.

It carries out the reaction ssDNA + n NTP = ssDNA/pppN(pN)n-1 hybrid + (n-1) diphosphate.. In terms of biological role, RNA polymerase that catalyzes the synthesis of short RNA molecules used as primers for DNA polymerase during DNA replication. Also part of the exosome, which is a complex involved in RNA degradation. Acts as a poly(A)-binding protein that enhances the interaction between heteromeric, adenine-rich transcripts and the exosome. In Staphylothermus marinus (strain ATCC 43588 / DSM 3639 / JCM 9404 / F1), this protein is DNA primase DnaG.